The primary structure comprises 626 residues: Basic helix-loop-helix ARNT-like protein 1 (626 aa).

The segment at 1 to 58 is disordered; the sequence is MADQRMDISSTISDFMSPGPTDLLSGSLSTSGVDCNRKRKGSATDYQESMDTDKDDPH. Ser17 carries the phosphoserine; by GSK3-beta modification. Low complexity predominate over residues 17–32; sequence SPGPTDLLSGSLSTSG. A Phosphothreonine; by GSK3-beta modification is found at Thr21. The Nuclear localization signal motif lies at 36-41; the sequence is NRKRKG. Positions 72–125 constitute a bHLH domain; the sequence is NAREAHSQIEKRRRDKMNSFIDELASLVPTCNAMSRKLDKLTVLRMAVQHMKTL. Ser78 bears the Phosphoserine mark. Phosphoserine; by CK2 is present on Ser90. The Nuclear export signal 1 motif lies at 142-152; it reads LSDDELKHLIL. The PAS 1 domain maps to 143–215; sequence SDDELKHLIL…EQLSSSDTAP (73 aa). Lys252 participates in a covalent cross-link: Glycyl lysine isopeptide (Lys-Gly) (interchain with G-Cter in SUMO2 and SUMO3). A Glycyl lysine isopeptide (Lys-Gly) (interchain with G-Cter in SUMO); alternate cross-link involves residue Lys259. Residue Lys259 forms a Glycyl lysine isopeptide (Lys-Gly) (interchain with G-Cter in SUMO2); alternate linkage. The PAS 2 domain maps to 326–396; sequence PQPVNGEIRV…ECHRQVLQTR (71 aa). The Nuclear export signal 2 signature appears at 361-369; that stretch reads LAYLPQELL. One can recognise a PAC domain in the interval 401–444; the sequence is TNCYKFKIKDGSFITLRSRWFSFMNPWTKEVEYIVSTNTVVLAN. Disordered regions lie at residues 459–492 and 511–595; these read SPHS…RAGA and GSSP…SPSN. The interaction with CIART stretch occupies residues 508 to 588; that stretch reads RIRGSSPSSC…IGIDMIDNDQ (81 aa). Over residues 511–521 the composition is skewed to low complexity; that stretch reads GSSPSSCGSSP. Lys538 is subject to N6-acetyllysine.

In terms of assembly, component of the circadian clock oscillator which includes the CRY1/2 proteins, CLOCK or NPAS2, BMAL1 or BMAL2, CSNK1D and/or CSNK1E, TIMELESS and the PER1/2/3 proteins. Forms a heterodimer with CLOCK. The CLOCK-BMAL1 heterodimer is required for E-box-dependent transactivation, for CLOCK nuclear translocation and degradation, and, for phosphorylation of both CLOCK and BMAL1. Part of a nuclear complex which also includes RACK1 and PRKCA; RACK1 and PRKCA are recruited to the complex in a circadian manner. Interacts with NPAS2. Interacts with EZH2. Interacts with SUMO3. Interacts with SIRT1. Interacts with AHR. Interacts with ID1, ID2 and ID3. Interacts with DDX4. Interacts with OGT. Interacts with EED and SUZ12. Interacts with MTA1. Interacts with CIART. Interacts with HSP90. Interacts with KAT2B and EP300. Interacts with BHLHE40/DEC1 and BHLHE41/DEC2. Interacts with RELB and the interaction is enhanced in the presence of CLOCK. Interacts with PER1, PER2, CRY1 and CRY2 and this interaction requires a translocation to the nucleus. Interaction of the CLOCK-BMAL1 heterodimer with PER or CRY inhibits transcription activation. Interaction of the CLOCK-BMAL1 with CRY1 is independent of DNA but with PER2 is off DNA. The CLOCK-BMAL1 heterodimer interacts with GSK3B. Interacts with KDM5A. Interacts with KMT2A; in a circadian manner. Interacts with UBE3A. Interacts with PRKCG. Interacts with MAGEL2. Interacts with NCOA2. Interacts with THRAP3. The CLOCK-BMAL1 heterodimer interacts with PASD1. Interacts with PASD1. Interacts with USP9X. Interacts with PIWIL2 (via PIWI domain). Interacts with HDAC3. Interacts with HNF4A. In terms of processing, ubiquitinated, leading to its proteasomal degradation. Deubiquitinated by USP9X. Post-translationally, O-glycosylated; contains O-GlcNAc. O-glycosylation by OGT prevents protein degradation by inhibiting ubiquitination. It also stabilizes the CLOCK-BMAL1 heterodimer thereby increasing CLOCK-BMAL1-mediated transcription of genes in the negative loop of the circadian clock such as PER1/2/3 and CRY1/2. Acetylated on Lys-538 by CLOCK during the repression phase of the circadian cycle. Acetylation facilitates recruitment of CRY1 protein and initiates the repression phase of the circadian cycle. Acetylated at Lys-538 by KAT5 during the activation phase of the cycle, leading to recruitment of the positive transcription elongation factor b (P-TEFb) and BRD4, followed by productive elongation of circadian transcripts. Deacetylated by SIRT1, which may result in decreased protein stability. In terms of processing, phosphorylated upon dimerization with CLOCK. Phosphorylation enhances the transcriptional activity, alters the subcellular localization and decreases the stability of the CLOCK-BMAL1 heterodimer by promoting its degradation. Phosphorylation shows circadian variations in the liver with a peak between CT10 to CT14. Phosphorylation at Ser-90 by CK2 is essential for its nuclear localization, its interaction with CLOCK and controls CLOCK nuclear entry. Dephosphorylation at Ser-78 is important for dimerization with CLOCK and transcriptional activity. Post-translationally, sumoylated on Lys-259 upon dimerization with CLOCK. Predominantly conjugated to poly-SUMO2/3 rather than SUMO1 and the level of these conjugates undergo rhythmic variation, peaking at CT9-CT12. Sumoylation localizes it exclusively to the PML body and promotes its ubiquitination in the PML body, ubiquitin-dependent proteasomal degradation and the transcriptional activity of the CLOCK-BMAL1 heterodimer. Undergoes lysosome-mediated degradation in a time-dependent manner in the liver.

The protein resides in the nucleus. The protein localises to the cytoplasm. Its subcellular location is the PML body. Its function is as follows. Transcriptional activator which forms a core component of the circadian clock. The circadian clock, an internal time-keeping system, regulates various physiological processes through the generation of approximately 24 hour circadian rhythms in gene expression, which are translated into rhythms in metabolism and behavior. It is derived from the Latin roots 'circa' (about) and 'diem' (day) and acts as an important regulator of a wide array of physiological functions including metabolism, sleep, body temperature, blood pressure, endocrine, immune, cardiovascular, and renal function. Consists of two major components: the central clock, residing in the suprachiasmatic nucleus (SCN) of the brain, and the peripheral clocks that are present in nearly every tissue and organ system. Both the central and peripheral clocks can be reset by environmental cues, also known as Zeitgebers (German for 'timegivers'). The predominant Zeitgeber for the central clock is light, which is sensed by retina and signals directly to the SCN. The central clock entrains the peripheral clocks through neuronal and hormonal signals, body temperature and feeding-related cues, aligning all clocks with the external light/dark cycle. Circadian rhythms allow an organism to achieve temporal homeostasis with its environment at the molecular level by regulating gene expression to create a peak of protein expression once every 24 hours to control when a particular physiological process is most active with respect to the solar day. Transcription and translation of core clock components (CLOCK, NPAS2, BMAL1, BMAL2, PER1, PER2, PER3, CRY1 and CRY2) plays a critical role in rhythm generation, whereas delays imposed by post-translational modifications (PTMs) are important for determining the period (tau) of the rhythms (tau refers to the period of a rhythm and is the length, in time, of one complete cycle). A diurnal rhythm is synchronized with the day/night cycle, while the ultradian and infradian rhythms have a period shorter and longer than 24 hours, respectively. Disruptions in the circadian rhythms contribute to the pathology of cardiovascular diseases, cancer, metabolic syndromes and aging. A transcription/translation feedback loop (TTFL) forms the core of the molecular circadian clock mechanism. Transcription factors, CLOCK or NPAS2 and BMAL1 or BMAL2, form the positive limb of the feedback loop, act in the form of a heterodimer and activate the transcription of core clock genes and clock-controlled genes (involved in key metabolic processes), harboring E-box elements (5'-CACGTG-3') within their promoters. The core clock genes: PER1/2/3 and CRY1/2 which are transcriptional repressors form the negative limb of the feedback loop and interact with the CLOCK|NPAS2-BMAL1|BMAL2 heterodimer inhibiting its activity and thereby negatively regulating their own expression. This heterodimer also activates nuclear receptors NR1D1/2 and RORA/B/G, which form a second feedback loop and which activate and repress BMAL1 transcription, respectively. BMAL1 positively regulates myogenesis and negatively regulates adipogenesis via the transcriptional control of the genes of the canonical Wnt signaling pathway. Plays a role in normal pancreatic beta-cell function; regulates glucose-stimulated insulin secretion via the regulation of antioxidant genes NFE2L2/NRF2 and its targets SESN2, PRDX3, CCLC and CCLM. Negatively regulates the mTORC1 signaling pathway; regulates the expression of MTOR and DEPTOR. Controls diurnal oscillations of Ly6C inflammatory monocytes; rhythmic recruitment of the PRC2 complex imparts diurnal variation to chemokine expression that is necessary to sustain Ly6C monocyte rhythms. Regulates the expression of HSD3B2, STAR, PTGS2, CYP11A1, CYP19A1 and LHCGR in the ovary and also the genes involved in hair growth. Plays an important role in adult hippocampal neurogenesis by regulating the timely entry of neural stem/progenitor cells (NSPCs) into the cell cycle and the number of cell divisions that take place prior to cell-cycle exit. Regulates the circadian expression of CIART and KLF11. The CLOCK-BMAL1 heterodimer regulates the circadian expression of SERPINE1/PAI1, VWF, B3, CCRN4L/NOC, NAMPT, DBP, MYOD1, PPARGC1A, PPARGC1B, SIRT1, GYS2, F7, NGFR, GNRHR, BHLHE40/DEC1, ATF4, MTA1, KLF10 and also genes implicated in glucose and lipid metabolism. Promotes rhythmic chromatin opening, regulating the DNA accessibility of other transcription factors. May play a role in spermatogenesis; contributes to the chromatoid body assembly and physiology. The NPAS2-BMAL1 heterodimer positively regulates the expression of MAOA, F7 and LDHA and modulates the circadian rhythm of daytime contrast sensitivity by regulating the rhythmic expression of adenylate cyclase type 1 (ADCY1) in the retina. The preferred binding motif for the CLOCK-BMAL1 heterodimer is 5'-CACGTGA-3', which contains a flanking adenine nucleotide at the 3-prime end of the canonical 6-nucleotide E-box sequence. CLOCK specifically binds to the half-site 5'-CAC-3', while BMAL1 binds to the half-site 5'-GTGA-3'. The CLOCK-BMAL1 heterodimer also recognizes the non-canonical E-box motifs 5'-AACGTGA-3' and 5'-CATGTGA-3'. Essential for the rhythmic interaction of CLOCK with ASS1 and plays a critical role in positively regulating CLOCK-mediated acetylation of ASS1. Plays a role in protecting against lethal sepsis by limiting the expression of immune checkpoint protein CD274 in macrophages in a PKM2-dependent manner. Regulates the diurnal rhythms of skeletal muscle metabolism via transcriptional activation of genes promoting triglyceride synthesis (DGAT2) and metabolic efficiency (COQ10B). This is Basic helix-loop-helix ARNT-like protein 1 from Rattus norvegicus (Rat).